We begin with the raw amino-acid sequence, 301 residues long: Light-independent protochlorophyllide reductase iron-sulfur ATP-binding protein (301 aa).

Low complexity predominate over residues 1–13; sequence MNVTLRPPLAAAP. The segment at 1 to 22 is disordered; sequence MNVTLRPPLAAAPRRPDGAGSV. Residues 45-50 and lysine 74 each bind ATP; that span reads GIGKST. A Mg(2+)-binding site is contributed by serine 49. 2 residues coordinate [4Fe-4S] cluster: cysteine 130 and cysteine 164. ATP contacts are provided by residues 215-216 and 239-241; these read NR and PDL.

Belongs to the NifH/BchL/ChlL family. In terms of assembly, homodimer. Protochlorophyllide reductase is composed of three subunits; BchL, BchN and BchB. The cofactor is [4Fe-4S] cluster.

It carries out the reaction chlorophyllide a + oxidized 2[4Fe-4S]-[ferredoxin] + 2 ADP + 2 phosphate = protochlorophyllide a + reduced 2[4Fe-4S]-[ferredoxin] + 2 ATP + 2 H2O. It participates in porphyrin-containing compound metabolism; bacteriochlorophyll biosynthesis (light-independent). Functionally, component of the dark-operative protochlorophyllide reductase (DPOR) that uses Mg-ATP and reduced ferredoxin to reduce ring D of protochlorophyllide (Pchlide) to form chlorophyllide a (Chlide). This reaction is light-independent. The L component serves as a unique electron donor to the NB-component of the complex, and binds Mg-ATP. The protein is Light-independent protochlorophyllide reductase iron-sulfur ATP-binding protein of Bradyrhizobium sp. (strain ORS 278).